Reading from the N-terminus, the 215-residue chain is Ribosomal RNA small subunit methyltransferase G (215 aa).

Positions 71, 76, and 135 each coordinate S-adenosyl-L-methionine.

This sequence belongs to the methyltransferase superfamily. RNA methyltransferase RsmG family.

The protein localises to the cytoplasm. Functionally, specifically methylates the N7 position of a guanine in 16S rRNA. The sequence is that of Ribosomal RNA small subunit methyltransferase G from Salinibacter ruber (strain DSM 13855 / M31).